A 374-amino-acid polypeptide reads, in one-letter code: Retron Eco8 reverse transcriptase (374 aa).

Residues 25-252 (ENIITQSAIP…KEISINGYVI (228 aa)) form the Reverse transcriptase domain. The Mg(2+) site is built by Asp-107, Asp-200, and Asp-201.

It belongs to the bacterial reverse transcriptase family.

The enzyme catalyses DNA(n) + a 2'-deoxyribonucleoside 5'-triphosphate = DNA(n+1) + diphosphate. Its function is as follows. Reverse transcriptase (RT) component of antiviral defense system retron Eco8, composed of this RT, the following endonuclease and a non-coding RNA (ncRNA) encoded between them. Expression of retron Eco8 confers protection against bacteriophages T4, T6, T7 and SECphi4, SECphi6 and SECphi18. At multiplicity of infection (MOI) of 0.02 cultures slow growth when infected with SECphi4 but do not collapse, at MOI 2 cultures collapse. Responsible for synthesis of msDNA (a branched molecule with RNA linked by a 2',5'-phosphodiester bond to ssDNA). The retron transcript serves as primer (from a conserved internal G residue) and template for the reaction, and codes for the RT. The sequence is that of Retron Eco8 reverse transcriptase from Escherichia coli.